A 355-amino-acid polypeptide reads, in one-letter code: MTALKNDRFLRALLKQPVDVTPVWMMRQAGRYLPEYRATRAKAGDFMSLCMNPELACEVTLQPLDRYPQLDAAILFSDILTIPDAMGQGLYFETGEGPRFRKVVSSLADIEALPVPDPEQDLGYVMDAVRTIRRELNGRVPLIGFSGSPWTLATYMVEGGSSKDFRKSKAMLYDNPKAMHALLDKLAQSVTSYLNGQIHAGAQAVQIFDSWGGSLSAAAYQEFSLAYMRKIVDGLIREHDGRRVPVILFTKGGGLWLESMAEVGAEALGLDWTCDIGSARARVGERVALQGNMDPSVLYANPAAIRAEVARILAAYGKGTGHVFNLGHGITPEVDPAHAGAFFEAVHELSAQYHG.

Substrate is bound by residues arginine 27–arginine 31, phenylalanine 46, aspartate 78, tyrosine 155, serine 210, and histidine 328.

Belongs to the uroporphyrinogen decarboxylase family. Homodimer.

It localises to the cytoplasm. The enzyme catalyses uroporphyrinogen III + 4 H(+) = coproporphyrinogen III + 4 CO2. It participates in porphyrin-containing compound metabolism; protoporphyrin-IX biosynthesis; coproporphyrinogen-III from 5-aminolevulinate: step 4/4. Its function is as follows. Catalyzes the decarboxylation of four acetate groups of uroporphyrinogen-III to yield coproporphyrinogen-III. This is Uroporphyrinogen decarboxylase from Pseudomonas aeruginosa (strain ATCC 15692 / DSM 22644 / CIP 104116 / JCM 14847 / LMG 12228 / 1C / PRS 101 / PAO1).